A 272-amino-acid polypeptide reads, in one-letter code: Dermonecrotic toxin SpeSicTox-betaIB2b (272 aa).

His-5 is an active-site residue. Residues Glu-25 and Asp-27 each contribute to the Mg(2+) site. The active-site Nucleophile is the His-41. 2 disulfides stabilise this stretch: Cys-45–Cys-51 and Cys-47–Cys-191. Asp-85 provides a ligand contact to Mg(2+).

The protein belongs to the arthropod phospholipase D family. Class II subfamily. The cofactor is Mg(2+). Expressed by the venom gland.

The protein resides in the secreted. It catalyses the reaction an N-(acyl)-sphingosylphosphocholine = an N-(acyl)-sphingosyl-1,3-cyclic phosphate + choline. The enzyme catalyses an N-(acyl)-sphingosylphosphoethanolamine = an N-(acyl)-sphingosyl-1,3-cyclic phosphate + ethanolamine. The catalysed reaction is a 1-acyl-sn-glycero-3-phosphocholine = a 1-acyl-sn-glycero-2,3-cyclic phosphate + choline. It carries out the reaction a 1-acyl-sn-glycero-3-phosphoethanolamine = a 1-acyl-sn-glycero-2,3-cyclic phosphate + ethanolamine. Its function is as follows. Dermonecrotic toxins cleave the phosphodiester linkage between the phosphate and headgroup of certain phospholipids (sphingolipid and lysolipid substrates), forming an alcohol (often choline) and a cyclic phosphate. This toxin acts on sphingomyelin (SM). It may also act on ceramide phosphoethanolamine (CPE), lysophosphatidylcholine (LPC) and lysophosphatidylethanolamine (LPE), but not on lysophosphatidylserine (LPS), and lysophosphatidylglycerol (LPG). It acts by transphosphatidylation, releasing exclusively cyclic phosphate products as second products. Induces dermonecrosis, hemolysis, increased vascular permeability, edema, inflammatory response, and platelet aggregation. This is Dermonecrotic toxin SpeSicTox-betaIB2b from Sicarius peruensis (Six-eyed sand spider).